A 492-amino-acid chain; its full sequence is 6-phosphogluconate dehydrogenase, decarboxylating (492 aa).

Residues 13–18 (GLAVMG), 36–38 (NRT), 78–80 (VKA), and N106 contribute to the NADP(+) site. N106 is a binding site for substrate. Position 107 is a phosphoserine (S107). 132–134 (SGG) contributes to the substrate binding site. K187 (proton acceptor) is an active-site residue. Position 190–191 (190–191 (HN)) interacts with substrate. E194 functions as the Proton donor in the catalytic mechanism. A substrate-binding site is contributed by Y195. Position 215 is a phosphoserine (S215). K264, R291, R449, and H455 together coordinate substrate.

The protein belongs to the 6-phosphogluconate dehydrogenase family. Homodimer.

The catalysed reaction is 6-phospho-D-gluconate + NADP(+) = D-ribulose 5-phosphate + CO2 + NADPH. It functions in the pathway carbohydrate degradation; pentose phosphate pathway; D-ribulose 5-phosphate from D-glucose 6-phosphate (oxidative stage): step 3/3. Its function is as follows. Catalyzes the oxidative decarboxylation of 6-phosphogluconate to ribulose 5-phosphate and CO(2), with concomitant reduction of NADP to NADPH. This Schizosaccharomyces pombe (strain 972 / ATCC 24843) (Fission yeast) protein is 6-phosphogluconate dehydrogenase, decarboxylating.